The sequence spans 147 residues: Large ribosomal subunit protein uL13 (147 aa).

The segment at 126 to 147 is disordered; that stretch reads GGPEHPHAAQNPQPYEITQIAQ.

Belongs to the universal ribosomal protein uL13 family. In terms of assembly, part of the 50S ribosomal subunit.

Functionally, this protein is one of the early assembly proteins of the 50S ribosomal subunit, although it is not seen to bind rRNA by itself. It is important during the early stages of 50S assembly. This Cutibacterium acnes (strain DSM 16379 / KPA171202) (Propionibacterium acnes) protein is Large ribosomal subunit protein uL13.